A 251-amino-acid chain; its full sequence is 1-(5-phosphoribosyl)-5-[(5-phosphoribosylamino)methylideneamino] imidazole-4-carboxamide isomerase (251 aa).

D8 serves as the catalytic Proton acceptor. The Proton donor role is filled by D129.

This sequence belongs to the HisA/HisF family.

It localises to the cytoplasm. The enzyme catalyses 1-(5-phospho-beta-D-ribosyl)-5-[(5-phospho-beta-D-ribosylamino)methylideneamino]imidazole-4-carboxamide = 5-[(5-phospho-1-deoxy-D-ribulos-1-ylimino)methylamino]-1-(5-phospho-beta-D-ribosyl)imidazole-4-carboxamide. It participates in amino-acid biosynthesis; L-histidine biosynthesis; L-histidine from 5-phospho-alpha-D-ribose 1-diphosphate: step 4/9. The protein is 1-(5-phosphoribosyl)-5-[(5-phosphoribosylamino)methylideneamino] imidazole-4-carboxamide isomerase of Desulfosudis oleivorans (strain DSM 6200 / JCM 39069 / Hxd3) (Desulfococcus oleovorans).